We begin with the raw amino-acid sequence, 646 residues long: Threonine--tRNA ligase (646 aa).

One can recognise a TGS domain in the interval 1–63; sequence MADLSIIFPD…SSGGSIEIIT (63 aa). The tract at residues 244 to 541 is catalytic; that stretch reads DHRKLGKELG…LIEEYKGAFP (298 aa). The Zn(2+) site is built by Cys337, His388, and His518.

Belongs to the class-II aminoacyl-tRNA synthetase family. Homodimer. Zn(2+) serves as cofactor.

It is found in the cytoplasm. It catalyses the reaction tRNA(Thr) + L-threonine + ATP = L-threonyl-tRNA(Thr) + AMP + diphosphate + H(+). Catalyzes the attachment of threonine to tRNA(Thr) in a two-step reaction: L-threonine is first activated by ATP to form Thr-AMP and then transferred to the acceptor end of tRNA(Thr). Also edits incorrectly charged L-seryl-tRNA(Thr). This is Threonine--tRNA ligase from Oceanobacillus iheyensis (strain DSM 14371 / CIP 107618 / JCM 11309 / KCTC 3954 / HTE831).